A 602-amino-acid polypeptide reads, in one-letter code: Elongation factor 4 (602 aa).

Positions 7-189 (ARLRNFCIIA…SVVDRIPPPK (183 aa)) constitute a tr-type G domain. Residues 19–24 (DHGKST) and 136–139 (NKVD) contribute to the GTP site.

This sequence belongs to the TRAFAC class translation factor GTPase superfamily. Classic translation factor GTPase family. LepA subfamily.

It localises to the cell inner membrane. The enzyme catalyses GTP + H2O = GDP + phosphate + H(+). Functionally, required for accurate and efficient protein synthesis under certain stress conditions. May act as a fidelity factor of the translation reaction, by catalyzing a one-codon backward translocation of tRNAs on improperly translocated ribosomes. Back-translocation proceeds from a post-translocation (POST) complex to a pre-translocation (PRE) complex, thus giving elongation factor G a second chance to translocate the tRNAs correctly. Binds to ribosomes in a GTP-dependent manner. The sequence is that of Elongation factor 4 from Prochlorococcus marinus (strain SARG / CCMP1375 / SS120).